We begin with the raw amino-acid sequence, 817 residues long: LPS-assembly protein LptD (817 aa).

The N-terminal stretch at 1–26 (MPALVVSPDLVRGAAGASAAPTPAPA) is a signal peptide. The interval 1–101 (MPALVVSPDL…ARKPGSTEVR (101 aa)) is disordered. Over residues 13-90 (GAAGASAAPT…PAASASPADA (78 aa)) the composition is skewed to low complexity.

This sequence belongs to the LptD family. In terms of assembly, component of the lipopolysaccharide transport and assembly complex. Interacts with LptE and LptA.

The protein resides in the cell outer membrane. Together with LptE, is involved in the assembly of lipopolysaccharide (LPS) at the surface of the outer membrane. This is LPS-assembly protein LptD from Azoarcus sp. (strain BH72).